The chain runs to 230 residues: Small ribosomal subunit protein uS3 (230 aa).

Positions 39 to 107 constitute a KH type-2 domain; the sequence is VRNYLFKKLI…PVHINIEEIK (69 aa).

It belongs to the universal ribosomal protein uS3 family. In terms of assembly, part of the 30S ribosomal subunit. Forms a tight complex with proteins S10 and S14.

Binds the lower part of the 30S subunit head. Binds mRNA in the 70S ribosome, positioning it for translation. This chain is Small ribosomal subunit protein uS3, found in Vesicomyosocius okutanii subsp. Calyptogena okutanii (strain HA).